A 297-amino-acid chain; its full sequence is UBX domain-containing protein 1 (297 aa).

The residue at position 2 (alanine 2) is an N-acetylalanine. The 41-residue stretch at 2–42 folds into the UBA domain; the sequence is AELTALESLIEMGFPRGRAEKALALTGNQGIEAAMDWLMEH. Residues 38 to 214 form a disordered region; the sequence is WLMEHEDDPD…PPTKREYDQC (177 aa). Over residues 42–52 the composition is skewed to acidic residues; sequence HEDDPDVDEPL. The interaction with BRCA1 stretch occupies residues 43-297; the sequence is EDDPDVDEPL…VLIVAKKCPS (255 aa). Basic and acidic residues-rich tracts occupy residues 86 to 122 and 137 to 177; these read LTEEERQEQTKRMLELVAQKQREREEREEREALEREK and KLQE…ERAK. Residue serine 199 is modified to Phosphoserine. Residue serine 200 is modified to Phosphoserine; by MAPK12. Phosphothreonine occurs at positions 207 and 229. Positions 209 to 291 constitute a UBX domain; that stretch reads REYDQCRIQV…GLVPSAVLIV (83 aa). Position 270 is a phosphoserine (serine 270).

As to quaternary structure, interacts with MAVS; this interaction prevents MAVS oligomerization and thus disrupts the RLR signaling pathway. Interacts with CUL1; this interaction inhibits CUL1-mediated degradation of NF-kappa-B inhibitors. Interacts with BIRC2/c-IAP1; this interaction prevents TNFalpha-stimulated RIP1 ubiquitination and subsequent NF-kappa-B activation. Component of a complex required to couple retrotranslocation, ubiquitination and deglycosylation composed of NGLY1, SAKS1, AMFR, VCP and RAD23B. Interacts with HOMER2. Interacts directly with VCP. Interacts with BRCA1 and BARD1; interaction takes place when BRCA1 is not autoubiquitinated but is strongly enhanced in the presence of autoubiquitinated BRCA1.

It is found in the cytoplasm. In terms of biological role, ubiquitin-binding protein that plays a role in the modulation of innate immune response. Blocks both the RIG-I-like receptors (RLR) and NF-kappa-B pathways. Following viral infection, UBXN1 is induced and recruited to the RLR component MAVS. In turn, interferes with MAVS oligomerization, and disrupts the MAVS/TRAF3/TRAF6 signalosome. This function probably serves as a brake to prevent excessive RLR signaling. Interferes with the TNFalpha-triggered NF-kappa-B pathway by interacting with cellular inhibitors of apoptosis proteins (cIAPs) and thereby inhibiting their recruitment to TNFR1. Also prevents the activation of NF-kappa-B by associating with CUL1 and thus inhibiting NF-kappa-B inhibitor alpha/NFKBIA degradation that remains bound to NF-kappa-B. Interacts with the BRCA1-BARD1 heterodimer and regulates its activity. Specifically binds 'Lys-6'-linked polyubiquitin chains. Interaction with autoubiquitinated BRCA1 leads to the inhibition of the E3 ubiquitin-protein ligase activity of the BRCA1-BARD1 heterodimer. Component of a complex required to couple deglycosylation and proteasome-mediated degradation of misfolded proteins in the endoplasmic reticulum that are retrotranslocated in the cytosol. The sequence is that of UBX domain-containing protein 1 (Ubxn1) from Mus musculus (Mouse).